A 579-amino-acid polypeptide reads, in one-letter code: Fatty-acid amide hydrolase 1 (579 aa).

Residues 9-29 (ALSGLSGVCLACSLLSAAVVL) traverse the membrane as a helical segment. At 30 to 403 (RWTRSQTARG…GDFVDPCLGD (374 aa)) the chain is on the cytoplasmic side. Residue Lys-142 is the Charge relay system of the active site. Substrate is bound by residues Met-191, Ser-217, and 238–241 (IGGS). The active-site Charge relay system is Ser-217. The active-site Acyl-ester intermediate is the Ser-241. Position 241 is a phosphoserine (Ser-241). Residues 404 to 433 (LVLVLKLPRWFKKLLSFLLKPLFPRLAAFL) lie within the membrane without spanning it. The Cytoplasmic portion of the chain corresponds to 434–579 (NSMCPRSAEK…RLMTPEKRPS (146 aa)).

It belongs to the amidase family. Homodimer.

The protein resides in the endoplasmic reticulum membrane. It localises to the golgi apparatus membrane. It catalyses the reaction N-(5Z,8Z,11Z,14Z-eicosatetraenoyl)-ethanolamine + H2O = ethanolamine + (5Z,8Z,11Z,14Z)-eicosatetraenoate. The catalysed reaction is (9Z)-octadecenamide + H2O = (9Z)-octadecenoate + NH4(+). The enzyme catalyses 2-(5Z,8Z,11Z,14Z-eicosatetraenoyl)-glycerol + H2O = glycerol + (5Z,8Z,11Z,14Z)-eicosatetraenoate + H(+). It carries out the reaction N-(9Z-hexadecenoyl) ethanolamine + H2O = (9Z)-hexadecenoate + ethanolamine. It catalyses the reaction N-(9Z-octadecenoyl) ethanolamine + H2O = ethanolamine + (9Z)-octadecenoate. The catalysed reaction is N-octadecanoyl ethanolamine + H2O = octadecanoate + ethanolamine. The enzyme catalyses N-docosanoyl-ethanolamine + H2O = docosanoate + ethanolamine. It carries out the reaction N-tetracosanoyl-taurine + H2O = tetracosanoate + taurine. It catalyses the reaction N-(15Z-tetracosenoyl)-ethanolamine + H2O = (15Z)-tetracosenoate + ethanolamine. The catalysed reaction is N-(9Z-octadecenoyl)-taurine + H2O = taurine + (9Z)-octadecenoate. The enzyme catalyses N-docosanoyl-taurine + H2O = docosanoate + taurine. It carries out the reaction N-(15Z-tetracosenoyl)-taurine + H2O = (15Z)-tetracosenoate + taurine. It catalyses the reaction N-tricosanoyl-taurine + H2O = tricosanoate + taurine. The catalysed reaction is (9Z,12Z,15Z)-octadecatrienamide + H2O = (9Z,12Z,15Z)-octadecatrienoate + NH4(+). The enzyme catalyses (5Z,8Z,11Z,14Z)-eicosatetraenamide + H2O = (5Z,8Z,11Z,14Z)-eicosatetraenoate + NH4(+). It carries out the reaction (6Z)-octadecenamide + H2O = (6Z)-octadecenoate + NH4(+). It catalyses the reaction (15Z)-tetracosenamide + H2O = (15Z)-tetracosenoate + NH4(+). The catalysed reaction is (8Z,11Z,14Z)-eicosatrienamide + H2O = (8Z,11Z,14Z)-eicosatrienoate + NH4(+). The enzyme catalyses (11Z,14Z,17Z)-eicosatrienamide + H2O = (11Z,14Z,17Z)-eicosatrienoate + NH4(+). It carries out the reaction (11Z,14Z)-eicosadienamide + H2O = (11Z,14Z)-eicosadienoate + NH4(+). It catalyses the reaction (9Z,12Z)-octadecadienamide + H2O = (9Z,12Z)-octadecadienoate + NH4(+). The catalysed reaction is tetradecamide + H2O = tetradecanoate + NH4(+). The enzyme catalyses 1-O-methyl-(5Z,8Z,11Z,14Z)-eicosatetraenoate + H2O = methanol + (5Z,8Z,11Z,14Z)-eicosatetraenoate + H(+). It carries out the reaction (11Z)-eicosenamide + H2O = (11Z)-eicosenoate + NH4(+). It catalyses the reaction (9Z)-octadecenoate + glycine = N-(9Z-octadecenoyl)glycine + H2O. The catalysed reaction is N-(5Z,8Z,11Z,14Z)-eicosatetraenoyl-glycine + H2O = (5Z,8Z,11Z,14Z)-eicosatetraenoate + glycine. The enzyme catalyses N-(5Z,8Z,11Z,14Z-eicosatetraenoyl)-L-serine + H2O = (5Z,8Z,11Z,14Z)-eicosatetraenoate + L-serine. Inhibited the trifluoromethyl compound PF-3845. Functionally, catalyzes the hydrolysis of endogenous amidated lipids like the endocannabinoid anandamide (N-(5Z,8Z,11Z,14Z-eicosatetraenoyl)-ethanolamine), as well as other fatty amides such as the taurine-conjugated fatty acids (a structural class of central nervous system (CNS) metabolites), to their corresponding fatty acids, thereby regulating the signaling functions of these molecules. FAAH cooperates with PM20D1 in the hydrolysis of amino acid-conjugated fatty acids such as N-fatty acyl glycine and N-fatty acyl-L-serine, thereby acting as a physiological regulator of specific subsets of intracellular, but not of extracellular, N-fatty acyl amino acids. It can also catalyze the hydrolysis of the endocannabinoid 2-arachidonoylglycerol (2-(5Z,8Z,11Z,14Z-eicosatetraenoyl)-glycerol). The polypeptide is Fatty-acid amide hydrolase 1 (Faah) (Mus musculus (Mouse)).